Consider the following 73-residue polypeptide: Large ribosomal subunit protein bL32c (73 aa).

This sequence belongs to the bacterial ribosomal protein bL32 family.

It localises to the plastid. The protein resides in the chloroplast. This is Large ribosomal subunit protein bL32c from Jasminum nudiflorum (Winter jasmine).